A 137-amino-acid polypeptide reads, in one-letter code: Small ribosomal subunit protein uS12 (137 aa).

The interval 33–57 is disordered; sequence KVQTNVSSPQKRGVATRVGTMTPKK. Residue D102 is modified to 3-methylthioaspartic acid.

It belongs to the universal ribosomal protein uS12 family. In terms of assembly, part of the 30S ribosomal subunit. Contacts proteins S8 and S17. May interact with IF1 in the 30S initiation complex.

In terms of biological role, with S4 and S5 plays an important role in translational accuracy. Interacts with and stabilizes bases of the 16S rRNA that are involved in tRNA selection in the A site and with the mRNA backbone. Located at the interface of the 30S and 50S subunits, it traverses the body of the 30S subunit contacting proteins on the other side and probably holding the rRNA structure together. The combined cluster of proteins S8, S12 and S17 appears to hold together the shoulder and platform of the 30S subunit. The sequence is that of Small ribosomal subunit protein uS12 from Streptococcus thermophilus (strain CNRZ 1066).